Reading from the N-terminus, the 375-residue chain is Probable disease resistance protein At1g52660 (375 aa).

In terms of domain architecture, NB-ARC spans 158–372 (ENTGIIGLYG…LSNSPPNFSG (215 aa)). Residue 167–174 (GVEGVGKT) participates in ATP binding.

In terms of biological role, possible disease resistance protein. This Arabidopsis thaliana (Mouse-ear cress) protein is Probable disease resistance protein At1g52660.